The following is a 180-amino-acid chain: Large ribosomal subunit protein uL5 (180 aa).

The protein belongs to the universal ribosomal protein uL5 family. In terms of assembly, part of the 50S ribosomal subunit; part of the 5S rRNA/L5/L18/L25 subcomplex. Contacts the 5S rRNA and the P site tRNA. Forms a bridge to the 30S subunit in the 70S ribosome.

This is one of the proteins that bind and probably mediate the attachment of the 5S RNA into the large ribosomal subunit, where it forms part of the central protuberance. In the 70S ribosome it contacts protein S13 of the 30S subunit (bridge B1b), connecting the 2 subunits; this bridge is implicated in subunit movement. Contacts the P site tRNA; the 5S rRNA and some of its associated proteins might help stabilize positioning of ribosome-bound tRNAs. This chain is Large ribosomal subunit protein uL5, found in Ruminiclostridium cellulolyticum (strain ATCC 35319 / DSM 5812 / JCM 6584 / H10) (Clostridium cellulolyticum).